A 337-amino-acid chain; its full sequence is MLAELSHRELIKLAQKRCIPPLLPKFHKGQSGGRVCIIGGCEDYTGAPYFSANATALMGCDLTHVICEYNAGTVIKSYTPNLMVHPYLRMSNTKLDVDMDEQRKKINSLLDRIHVVVIGPGLGRDPLMLKSIKDIIRYILEKHEGKIPLVIDADGLFLVTQDSEVKEMLKSYPKGRVILTPNVVEFKRLCDAIGKKGDSHSEMGSLIAQELNCIVVEKGQSDKIFSPDSEKDMLTNSEEGSNKRVGGQGDTLTGAISCMLAFSRAMYDFKICEQEEKGESSNDKPLKNWVDYAMLSCYAGCTITRECSRLGFKAKGRAMQTTDLNDRVGEVFAKLFG.

Serine 6 carries the phosphoserine modification. The 325-residue stretch at isoleucine 11–leucine 335 folds into the YjeF C-terminal domain. Residues glycine 121 and asparagine 182 to arginine 188 contribute to the (6S)-NADPHX site. ATP is bound by residues lysine 218–aspartate 222 and glycine 240–glycine 249. The segment at isoleucine 224 to glycine 246 is disordered. Aspartate 250 contributes to the (6S)-NADPHX binding site.

It belongs to the NnrD/CARKD family. Mg(2+) serves as cofactor.

Its subcellular location is the cytoplasm. It carries out the reaction (6S)-NADHX + ATP = ADP + phosphate + NADH + H(+). It catalyses the reaction (6S)-NADPHX + ATP = ADP + phosphate + NADPH + H(+). In terms of biological role, catalyzes the dehydration of the S-form of NAD(P)HX at the expense of ATP, which is converted to ADP. Together with NAD(P)HX epimerase, which catalyzes the epimerization of the S- and R-forms, the enzyme allows the repair of both epimers of NAD(P)HX, a damaged form of NAD(P)H that is a result of enzymatic or heat-dependent hydration. The polypeptide is ATP-dependent (S)-NAD(P)H-hydrate dehydratase (Saccharomyces cerevisiae (strain ATCC 204508 / S288c) (Baker's yeast)).